A 133-amino-acid chain; its full sequence is Phosphoribosyl-AMP cyclohydrolase (133 aa).

D82 is a binding site for Mg(2+). C83 provides a ligand contact to Zn(2+). D84 and D86 together coordinate Mg(2+). C100 and C107 together coordinate Zn(2+).

The protein belongs to the PRA-CH family. As to quaternary structure, homodimer. The cofactor is Mg(2+). It depends on Zn(2+) as a cofactor.

The protein resides in the cytoplasm. It carries out the reaction 1-(5-phospho-beta-D-ribosyl)-5'-AMP + H2O = 1-(5-phospho-beta-D-ribosyl)-5-[(5-phospho-beta-D-ribosylamino)methylideneamino]imidazole-4-carboxamide. It participates in amino-acid biosynthesis; L-histidine biosynthesis; L-histidine from 5-phospho-alpha-D-ribose 1-diphosphate: step 3/9. Functionally, catalyzes the hydrolysis of the adenine ring of phosphoribosyl-AMP. In Aromatoleum aromaticum (strain DSM 19018 / LMG 30748 / EbN1) (Azoarcus sp. (strain EbN1)), this protein is Phosphoribosyl-AMP cyclohydrolase.